Reading from the N-terminus, the 378-residue chain is Protein RecA (378 aa).

66–73 (GPESSGKT) contacts ATP. Positions 333–378 (PDAAKAEAATDAAAAADTAGTDDAAKSVPAPASKTAKATKATAVKS) are disordered. Residues 338–378 (AEAATDAAAAADTAGTDDAAKSVPAPASKTAKATKATAVKS) show a composition bias toward low complexity.

The protein belongs to the RecA family.

It localises to the cytoplasm. In terms of biological role, can catalyze the hydrolysis of ATP in the presence of single-stranded DNA, the ATP-dependent uptake of single-stranded DNA by duplex DNA, and the ATP-dependent hybridization of homologous single-stranded DNAs. It interacts with LexA causing its activation and leading to its autocatalytic cleavage. The chain is Protein RecA from Streptomyces venezuelae (strain ATCC 10712 / CBS 650.69 / DSM 40230 / JCM 4526 / NBRC 13096 / PD 04745).